Here is a 122-residue protein sequence, read N- to C-terminus: UPF0102 protein Cgl2031/cg2228 (122 aa).

The protein belongs to the UPF0102 family.

In Corynebacterium glutamicum (strain ATCC 13032 / DSM 20300 / JCM 1318 / BCRC 11384 / CCUG 27702 / LMG 3730 / NBRC 12168 / NCIMB 10025 / NRRL B-2784 / 534), this protein is UPF0102 protein Cgl2031/cg2228.